The following is a 388-amino-acid chain: Mannitol-1-phosphate 5-dehydrogenase (388 aa).

5–16 (AIQFGGGNIGRG) serves as a coordination point for NAD(+). Residue lysine 213 is part of the active site.

This sequence belongs to the mannitol dehydrogenase family. Monomer.

The catalysed reaction is D-mannitol 1-phosphate + NAD(+) = beta-D-fructose 6-phosphate + NADH + H(+). In terms of biological role, catalyzes the NAD(H)-dependent interconversion of D-fructose 6-phosphate and D-mannitol 1-phosphate in the metabolism of mannitol. Has a strong preference for NADH over NADPH. In Aspergillus niger (strain ATCC MYA-4892 / CBS 513.88 / FGSC A1513), this protein is Mannitol-1-phosphate 5-dehydrogenase (mpdA).